The sequence spans 265 residues: Ribosomal RNA small subunit methyltransferase G (265 aa).

The S-adenosyl-L-methionine site is built by G75, L80, and R145. A disordered region spans residues R212–T265. The span at T220–P257 shows a compositional bias: basic and acidic residues.

The protein belongs to the methyltransferase superfamily. RNA methyltransferase RsmG family.

It is found in the cytoplasm. In terms of biological role, specifically methylates the N7 position of guanine in position 518 of 16S rRNA. This chain is Ribosomal RNA small subunit methyltransferase G, found in Frankia casuarinae (strain DSM 45818 / CECT 9043 / HFP020203 / CcI3).